A 393-amino-acid polypeptide reads, in one-letter code: Digeranylgeranylglycerophospholipid reductase (393 aa).

Positions 14, 33, 44, 45, 47, 100, 124, 280, 292, and 293 each coordinate FAD.

Belongs to the geranylgeranyl reductase family. DGGGPL reductase subfamily. The cofactor is FAD.

The enzyme catalyses a 2,3-bis-O-phytanyl-sn-glycerol 1-phospholipid + 8 A = a 2,3-bis-O-(geranylgeranyl)-sn-glycerol 1-phospholipid + 8 AH2. It catalyses the reaction 2,3-bis-O-(phytanyl)-sn-glycerol 1-phosphate + 8 A = 2,3-bis-O-(geranylgeranyl)-sn-glycerol 1-phosphate + 8 AH2. The catalysed reaction is CDP-2,3-bis-O-(geranylgeranyl)-sn-glycerol + 8 AH2 = CDP-2,3-bis-O-(phytanyl)-sn-glycerol + 8 A. It carries out the reaction archaetidylserine + 8 AH2 = 2,3-bis-O-phytanyl-sn-glycero-3-phospho-L-serine + 8 A. Its pathway is membrane lipid metabolism; glycerophospholipid metabolism. Functionally, is involved in the reduction of 2,3-digeranylgeranylglycerophospholipids (unsaturated archaeols) into 2,3-diphytanylglycerophospholipids (saturated archaeols) in the biosynthesis of archaeal membrane lipids. Catalyzes the formation of archaetidic acid (2,3-di-O-phytanyl-sn-glyceryl phosphate) from 2,3-di-O-geranylgeranylglyceryl phosphate (DGGGP) via the hydrogenation of each double bond of the isoprenoid chains. Is also probably able to reduce double bonds of geranyl groups in CDP-2,3-bis-O-(geranylgeranyl)-sn-glycerol and archaetidylserine, thus acting at various stages in the biosynthesis of archaeal membrane lipids. The chain is Digeranylgeranylglycerophospholipid reductase from Methanobrevibacter smithii (strain ATCC 35061 / DSM 861 / OCM 144 / PS).